The sequence spans 397 residues: Proteinase-activated receptor 2 (397 aa).

Residues 1–25 form the signal peptide; sequence MRSLSLAWLLGGITLLAASASCNRT. An N-linked (GlcNAc...) asparagine glycan is attached at N23. A propeptide spans 26–36 (removed for receptor activation); sequence VNAPGPNSKGR. The Extracellular segment spans residues 37–71; that stretch reads SLIGRLDTPPPITGKGAPVEPGFSVDEFSASVLTG. A helical membrane pass occupies residues 72-101; it reads KLTTVFLPVIYIIVFVIGLPSNGMALWVFF. Residues 102–108 are Cytoplasmic-facing; the sequence is FRTKKKH. A helical membrane pass occupies residues 109 to 137; it reads PAVIYMANLALADLLSVIWFPLKISYHLH. Residues 138–149 are Extracellular-facing; that stretch reads GNDWTYGDALCK. C148 and C226 are oxidised to a cystine. The helical transmembrane segment at 150-177 threads the bilayer; the sequence is VLIGFFYGNMYCSILFMTCLSVQRYWVI. Topologically, residues 178-183 are cytoplasmic; that stretch reads VNPMGH. A helical membrane pass occupies residues 184–211; the sequence is SRKRANIAVGVSLAIWLLIFLVTIPLYV. The Extracellular segment spans residues 212–235; that stretch reads MRQTIYIPALNITTCHDVLPEEVL. N222 is a glycosylation site (N-linked (GlcNAc...) asparagine). Residues 236-269 traverse the membrane as a helical segment; sequence VGDMFSYFLSLAIGVFLFPALLTASAYVLMIKTL. The Cytoplasmic segment spans residues 270-277; sequence RSSAMDEH. A helical membrane pass occupies residues 278–317; it reads SEKKRRRAIRLIITVLSMYFICFAPSNVLLVVHYFLIKSQ. Topologically, residues 318–323 are extracellular; that stretch reads RQSHVY. A helical membrane pass occupies residues 324 to 347; that stretch reads ALYLVALCLSTLNSCIDPFVYYFV. Residues 348–397 lie on the Cytoplasmic side of the membrane; that stretch reads SKDFRDQARNALLCRSVRTVKRMQISLTSNKFSRKSSSYSSSSTSVKTSY. C361 is lipidated: S-palmitoyl cysteine.

It belongs to the G-protein coupled receptor 1 family. Interacts with TLR4, COPS5 and TMED2. Interacts with GNAQ, GNA11, GNA12, GNA13 and GNA14. Post-translationally, a proteolytic cleavage generates a new N-terminus that functions as a tethered ligand. Activating serine proteases include trypsin, mast cell tryptase, coagulation factors VII and Xa, myeloblastin/PRTN3 and membrane-type serine protease 1/ST14. Proposed subsequent cleavage by serine proteases is leading to receptor deactivation and include neutrophil elastase and cathepsin G. At least in part, implicated proteases are also shown to activate the receptor; the glycosylation status of the receptor is thought to contribute to the difference. In terms of processing, N-glycosylated and sialylated. Multiple phosphorylated on serine and threonine residues in the cytoplasmic region upon receptor activation; required for receptor desensitization and recruitment of beta-arrestin. Post-translationally, monoubiquitinated by Cbl at the plasma membrane and in early endosomes; not required for receptor endocytosis but for translocation to late endosomes or lysosomes. Deubiquitination involves Stambp and Usp8; required for lysosomal trafficking and receptor degradation.

The protein localises to the cell membrane. In terms of biological role, receptor for trypsin and trypsin-like enzymes coupled to G proteins. Its function is mediated through the activation of several signaling pathways including phospholipase C (PLC), intracellular calcium, mitogen-activated protein kinase (MAPK), I-kappaB kinase/NF-kappaB and Rho. Can also be transactivated by cleaved F2R/PAR1. Involved in modulation of inflammatory responses and regulation of innate and adaptive immunity, and acts as a sensor for proteolytic enzymes generated during infection. Generally is promoting inflammation. Can signal synergistically with TLR4 and probably TLR2 in inflammatory responses and modulates Tlr3 signaling. Has a protective role in establishing the endothelial barrier; the activity involves coagulation factor X. Regulates endothelial cell barrier integrity during neutrophil extravasation, probably following proteolytic cleavage by PRTN3. Proposed to have a bronchoprotective role in airway epithelium, but also shown to compromise the airway epithelial barrier by interrupting E-cadherin adhesion. Involved in the regulation of vascular tone; activation results in hypotension presumably mediated by vasodilation. Associates with a subset of G proteins alpha subunits such as GNAQ, GNA11, GNA14, GNA12 and GNA13, but probably not with G(o)-alpha, G(i) subunit alpha-1 and G(i) subunit alpha-2. Believed to be a class B receptor which internalizes as a complex with arrestin and traffic with it to endosomal vesicles, presumably as desensitized receptor, for extended periods of time. Mediates inhibition of TNF-alpha stimulated JNK phosphorylation via coupling to G GNAQ and GNA11; the function involves dissociation of RIPK1 and Tradd from TNFR1. Mediates phosphorylation of nuclear factor NF-kappa-B RELA subunit at 'Ser-536'; the function involves Ikbkb and is predominantly independent of G proteins. Involved in cellular migration. Involved in cytoskeletal rearrangement and chemotaxis through beta-arrestin-promoted scaffolds; the function is independent of GNAQ and GNA11 and involves promotion of cofilin dephosphorylation and actin filament severing. Induces redistribution of COPS5 from the plasma membrane to the cytosol and activation of the JNK cascade is mediated by Cops5. Involved in the recruitment of leukocytes to the sites of inflammation and is the major PAR receptor capable of modulating eosinophil function such as pro-inflammatory cytokine secretion, superoxide production and degranulation. During inflammation promotes dendritic cell maturation, trafficking to the lymph nodes and subsequent T-cell activation. Involved in antimicrobial response of innate immune cells; activation enhances phagocytosis of Gram-positive and killing of Gram-negative bacteria. Acts synergistically with interferon-gamma in enhancing antiviral responses. Probably mediates activation of pro-inflammatory and pro-fibrotic responses in fibroblasts, triggered by coagulation factor Xa (F10). Probably mediates activation of barrier protective signaling responses in endothelial cells, triggered by coagulation factor Xa (F10). The polypeptide is Proteinase-activated receptor 2 (F2rl1) (Rattus norvegicus (Rat)).